The primary structure comprises 445 residues: Argininosuccinate synthase (445 aa).

Residues 17–25 (AFSGGLDTS) and alanine 43 each bind ATP. Tyrosine 99 lines the L-citrulline pocket. Positions 129 and 131 each coordinate ATP. Residues threonine 131, asparagine 135, and aspartate 136 each contribute to the L-aspartate site. Asparagine 135 is an L-citrulline binding site. Aspartate 136 serves as a coordination point for ATP. L-citrulline-binding residues include arginine 139 and serine 192. An ATP-binding site is contributed by aspartate 194. Threonine 201, glutamate 203, and glutamate 280 together coordinate L-citrulline.

The protein belongs to the argininosuccinate synthase family. Type 2 subfamily. Homotetramer.

It localises to the cytoplasm. It catalyses the reaction L-citrulline + L-aspartate + ATP = 2-(N(omega)-L-arginino)succinate + AMP + diphosphate + H(+). Its pathway is amino-acid biosynthesis; L-arginine biosynthesis; L-arginine from L-ornithine and carbamoyl phosphate: step 2/3. This is Argininosuccinate synthase from Burkholderia cenocepacia (strain HI2424).